A 438-amino-acid polypeptide reads, in one-letter code: Phosphoribosylamine--glycine ligase (438 aa).

Positions 108-316 constitute an ATP-grasp domain; the sequence is REFMERNNIP…LLEIAKGIVE (209 aa). 135 to 194 contacts ATP; that stretch reads IDEYGKPVVVKPLGLTGGKGVKVVGYQLKDNEEAKEYAEHIIRKDGKVLIEERTDGVEFT. Residues Gln-274, Glu-286, and Asn-288 each coordinate Mg(2+). Gln-274, Glu-286, and Asn-288 together coordinate Mn(2+).

The protein belongs to the GARS family. Requires Mg(2+) as cofactor. Mn(2+) serves as cofactor.

It carries out the reaction 5-phospho-beta-D-ribosylamine + glycine + ATP = N(1)-(5-phospho-beta-D-ribosyl)glycinamide + ADP + phosphate + H(+). Its pathway is purine metabolism; IMP biosynthesis via de novo pathway; N(1)-(5-phospho-D-ribosyl)glycinamide from 5-phospho-alpha-D-ribose 1-diphosphate: step 2/2. The chain is Phosphoribosylamine--glycine ligase from Pyrococcus horikoshii (strain ATCC 700860 / DSM 12428 / JCM 9974 / NBRC 100139 / OT-3).